Reading from the N-terminus, the 138-residue chain is ATP synthase epsilon chain (138 aa).

It belongs to the ATPase epsilon chain family. F-type ATPases have 2 components, CF(1) - the catalytic core - and CF(0) - the membrane proton channel. CF(1) has five subunits: alpha(3), beta(3), gamma(1), delta(1), epsilon(1). CF(0) has three main subunits: a, b and c.

It localises to the cell membrane. Produces ATP from ADP in the presence of a proton gradient across the membrane. In Streptococcus suis (strain 98HAH33), this protein is ATP synthase epsilon chain.